A 376-amino-acid chain; its full sequence is Lipoyl synthase 1, mitochondrial (376 aa).

[4Fe-4S] cluster contacts are provided by Cys-109, Cys-114, Cys-120, Cys-140, Cys-144, Cys-147, and Ser-356. Residues 125 to 345 (ETGTATATIM…QTLGMEMGFR (221 aa)) enclose the Radical SAM core domain.

The protein belongs to the radical SAM superfamily. Lipoyl synthase family. It depends on [4Fe-4S] cluster as a cofactor.

It is found in the mitochondrion. It catalyses the reaction [[Fe-S] cluster scaffold protein carrying a second [4Fe-4S](2+) cluster] + N(6)-octanoyl-L-lysyl-[protein] + 2 oxidized [2Fe-2S]-[ferredoxin] + 2 S-adenosyl-L-methionine + 4 H(+) = [[Fe-S] cluster scaffold protein] + N(6)-[(R)-dihydrolipoyl]-L-lysyl-[protein] + 4 Fe(3+) + 2 hydrogen sulfide + 2 5'-deoxyadenosine + 2 L-methionine + 2 reduced [2Fe-2S]-[ferredoxin]. It participates in protein modification; protein lipoylation via endogenous pathway; protein N(6)-(lipoyl)lysine from octanoyl-[acyl-carrier-protein]: step 2/2. Functionally, catalyzes the radical-mediated insertion of two sulfur atoms into the C-6 and C-8 positions of the octanoyl moiety bound to the lipoyl domains of lipoate-dependent enzymes, thereby converting the octanoylated domains into lipoylated derivatives. The polypeptide is Lipoyl synthase 1, mitochondrial (Pisum sativum (Garden pea)).